A 191-amino-acid polypeptide reads, in one-letter code: Photosystem I assembly protein Ycf4 (191 aa).

2 helical membrane passes run 34-54 (VASM…SSYF) and 68-88 (IFVP…LLAI).

The protein belongs to the Ycf4 family.

It is found in the cellular thylakoid membrane. Its function is as follows. Seems to be required for the assembly of the photosystem I complex. This Prochlorococcus marinus (strain NATL2A) protein is Photosystem I assembly protein Ycf4.